Reading from the N-terminus, the 1413-residue chain is Leucine-rich repeat receptor protein kinase MSL1 (1413 aa).

Residues 1–23 (MAPMLSIASRSPSPALIAPHASA) form the signal peptide. Residues asparagine 153 and asparagine 192 are each glycosylated (N-linked (GlcNAc...) asparagine). LRR repeat units lie at residues 185–209 (FQSL…MVNL), 210–233 (QHLQ…LFDL), 235–257 (MLKV…IAHL), 258–281 (QQLT…LGSL), 282–304 (KNLE…SFSN), 306–329 (SRLL…IRAL), 330–353 (VNLV…LCQL), 354–377 (KNLQ…IGNL), 379–401 (QLEV…IGNL), 402–425 (EILE…VGEL), 427–449 (NLRQ…LGNC), 450–473 (KKLT…LADL), 475–497 (AVVL…IQNW), 498–518 (SNVS…PGLP), 519–542 (LHLV…ICQG), 543–565 (TFLQ…TFKG), 567–589 (KNLT…YLAL), 590–613 (LPLV…LWES), 615–636 (TILD…SIGK), 637–661 (LLSL…IGAL), 662–685 (RNLT…LFNC), 687–709 (NLVT…ISHL), 710–733 (TKLN…LCVA), 745–769 (VQHI…INNC), 771–793 (ILVE…LAEL), 794–817 (RNIT…PVPL), 818–841 (ASLQ…IGNI), 843–866 (PQIT…LLCK), and 868–890 (SLNH…CHED). N-linked (GlcNAc...) asparagine glycans are attached at residues asparagine 304 and asparagine 317. N-linked (GlcNAc...) asparagine glycosylation is found at asparagine 461, asparagine 496, and asparagine 499. Residues asparagine 554, asparagine 568, and asparagine 601 are each glycosylated (N-linked (GlcNAc...) asparagine). Asparagine 663 and asparagine 697 each carry an N-linked (GlcNAc...) asparagine glycan. A glycan (N-linked (GlcNAc...) asparagine) is linked at asparagine 768. N-linked (GlcNAc...) asparagine glycosylation occurs at asparagine 795. Asparagine 878, asparagine 901, asparagine 917, and asparagine 928 each carry an N-linked (GlcNAc...) asparagine glycan. 2 LRR repeats span residues 918-942 (FTKL…IARV) and 944-966 (SLYY…ICGM). A glycan (N-linked (GlcNAc...) asparagine) is linked at asparagine 973. Residues 1016–1036 (TICCIATAIVIVLVVILVVYL) traverse the membrane as a helical segment. One can recognise a Protein kinase domain in the interval 1107 to 1401 (FDGMHVVGDG…IEAMEYGPLV (295 aa)). ATP is bound by residues 1113–1121 (VGDGGFGTV) and lysine 1135. Catalysis depends on aspartate 1234, which acts as the Proton acceptor.

It belongs to the protein kinase superfamily. Ser/Thr protein kinase family. Expressed in roots, leaves, shoots and spikelets.

Its subcellular location is the cell membrane. It carries out the reaction L-seryl-[protein] + ATP = O-phospho-L-seryl-[protein] + ADP + H(+). The enzyme catalyses L-threonyl-[protein] + ATP = O-phospho-L-threonyl-[protein] + ADP + H(+). Its function is as follows. Receptor-like kinase that may play a role male and female sporogenesis. The polypeptide is Leucine-rich repeat receptor protein kinase MSL1 (Oryza sativa subsp. japonica (Rice)).